A 339-amino-acid chain; its full sequence is tRNA N6-adenosine threonylcarbamoyltransferase (339 aa).

Fe cation-binding residues include His-117 and His-121. Residues 140–144, Asp-173, Gly-186, and Asn-279 contribute to the substrate site; that span reads VVSGG. Asp-307 contributes to the Fe cation binding site.

It belongs to the KAE1 / TsaD family. It depends on Fe(2+) as a cofactor.

It is found in the cytoplasm. It carries out the reaction L-threonylcarbamoyladenylate + adenosine(37) in tRNA = N(6)-L-threonylcarbamoyladenosine(37) in tRNA + AMP + H(+). Its function is as follows. Required for the formation of a threonylcarbamoyl group on adenosine at position 37 (t(6)A37) in tRNAs that read codons beginning with adenine. Is involved in the transfer of the threonylcarbamoyl moiety of threonylcarbamoyl-AMP (TC-AMP) to the N6 group of A37, together with TsaE and TsaB. TsaD likely plays a direct catalytic role in this reaction. The polypeptide is tRNA N6-adenosine threonylcarbamoyltransferase (Syntrophomonas wolfei subsp. wolfei (strain DSM 2245B / Goettingen)).